A 204-amino-acid chain; its full sequence is Proteasome subunit beta type-3-B (204 aa).

This sequence belongs to the peptidase T1B family. Component of the 20S core complex of the 26S proteasome. The 26S proteasome is composed of a core protease (CP), known as the 20S proteasome, capped at one or both ends by the 19S regulatory particle (RP/PA700). The 20S proteasome core is composed of 28 subunits that are arranged in four stacked rings, resulting in a barrel-shaped structure. The two end rings are each formed by seven alpha subunits, and the two central rings are each formed by seven beta subunits. The catalytic chamber with the active sites is on the inside of the barrel.

Its subcellular location is the cytoplasm. It is found in the nucleus. Functionally, non-catalytic component of the proteasome, a multicatalytic proteinase complex which is characterized by its ability to cleave peptides with Arg, Phe, Tyr, Leu, and Glu adjacent to the leaving group at neutral or slightly basic pH. The proteasome has an ATP-dependent proteolytic activity. The polypeptide is Proteasome subunit beta type-3-B (PBC2) (Arabidopsis thaliana (Mouse-ear cress)).